We begin with the raw amino-acid sequence, 299 residues long: MAEFPASLLILNGKSTDNLPLREAIMLLREEGMTIHVRVTWEKGDAARFVEEARKLGVATVIAGGGDGTINEVSTALIQCEGDDIPALGILPLGTANDFATSVGIPEALDKALKLAIAGNAIAIDMAQVNKQTCFINMATGGFGTRITTETPEKLKAALGGVSYIIHGLMRMDTLQPDRCEIRGENFHWQGDALVIGIGNGRQAGGGQQLCPNALINDGLLQLRIFTGDEILPALVSTLKSDEDNPNIIEGASSWFDIQAPHEITFNLDGEPLSGQNFHIEILPAALRCRLPPDCPLLR.

Residues 2–133 (AEFPASLLIL…IDMAQVNKQT (132 aa)) form the DAGKc domain. Residues threonine 40, 66–72 (GDGTINE), and threonine 95 contribute to the ATP site. The Mg(2+) site is built by leucine 215, aspartate 218, and leucine 220. The Proton acceptor role is filled by glutamate 271.

Belongs to the diacylglycerol/lipid kinase family. YegS lipid kinase subfamily. Mg(2+) is required as a cofactor. The cofactor is Ca(2+).

It localises to the cytoplasm. Its function is as follows. Probably phosphorylates lipids; the in vivo substrate is unknown. This Shigella boydii serotype 18 (strain CDC 3083-94 / BS512) protein is Probable lipid kinase YegS.